The primary structure comprises 550 residues: Endonuclease/exonuclease/phosphatase family domain-containing protein 1 (550 aa).

The HhH domain maps to 39–68 (ERLNINTATEEELMTLPGVNRGVAQNIVEY). Residues 194 to 213 (STNTNGGFTHPSPTSFSVQS) show a composition bias toward polar residues. The tract at residues 194 to 216 (STNTNGGFTHPSPTSFSVQSDEP) is disordered.

In Danio rerio (Zebrafish), this protein is Endonuclease/exonuclease/phosphatase family domain-containing protein 1 (eepd1).